The chain runs to 269 residues: MNSPYQPTILFFDSGMGGFSVYKETKQLLPDCHYLYCFDNAFFPYSEKSEEEIIQRTLKICQKIDRTFPLDLIVIACNTASTVVLPALRAHFAIPVVGTVPAIKPAAECSETKHIGLLATKGTVKRAYVADLIAQYARDCTVEKLGSTKLVEIAEQKLHGKAVDLHALKQELAPWQSIQNLDTVVLGCTHFPLIKEEIKWCLPQVRFFVDSGKAIALRVKTLLSKIDIQSKTNEKNLIFCTQFFEDETQFQKVIHFWGFEQLINLNMKA.

Substrate is bound by residues 13–14 (DS) and 45–46 (YS). Residue cysteine 77 is the Proton donor/acceptor of the active site. 78–79 (NT) contacts substrate. The Proton donor/acceptor role is filled by cysteine 188. Substrate is bound at residue 189–190 (TH).

The protein belongs to the aspartate/glutamate racemases family.

It carries out the reaction L-glutamate = D-glutamate. It functions in the pathway cell wall biogenesis; peptidoglycan biosynthesis. Functionally, provides the (R)-glutamate required for cell wall biosynthesis. In Pasteurella multocida (strain Pm70), this protein is Glutamate racemase.